We begin with the raw amino-acid sequence, 389 residues long: MEVMRVLHMNKGNGETSYAKNSTAQSNIISLGRRVMDEALKKLMMSNSEISSIGIADLGCSSGPNSLLSISNIVDTIHNLCPDLDRPVPELRVSLNDLPSNDFNYICASLPEFYDRVNNNKEGLGFGRGGGESCFVSAVPGSFYGRLFPRRSLHFVHSSSSLHWLSQVPCREAEKEDRTITADLENMGKIYISKTSPKSAHKAYALQFQTDFWVFLRSRSEELVPGGRMVLSFLGRRSLDPTTEESCYQWELLAQALMSMAKEGIIEEEKIDAFNAPYYAASSEELKMVIEKEGSFSIDRLEISPIDWEGGSISEESYDLVIRSKPEALASGRRVSNTIRAVVEPMLEPTFGENVMDELFERYAKIVGEYFYVSSPRYAIVILSLVRAG.

Y18 provides a ligand contact to S-adenosyl-L-homocysteine. Q25 provides a ligand contact to jasmonate. 6 residues coordinate S-adenosyl-L-homocysteine: C60, N65, D97, L98, S142, and F143. Jasmonate-binding residues include H163 and W164. Mg(2+) contacts are provided by N186, D272, F274, and N275.

The protein belongs to the methyltransferase superfamily. Type-7 methyltransferase family. Requires Mg(2+) as cofactor. In terms of tissue distribution, expressed in rosettes, cauline leaves and developing flowers but not in young seedlings.

The protein localises to the cytoplasm. Its subcellular location is the nucleus. It catalyses the reaction jasmonate + S-adenosyl-L-methionine = methyl (-)-jasmonate + S-adenosyl-L-homocysteine. It functions in the pathway lipid metabolism; oxylipin biosynthesis. In terms of biological role, catalyzes the methylation of jasmonate into methyljasmonate, a plant volatile that acts as an important cellular regulator mediating diverse developmental processes and defense responses. This chain is Jasmonate O-methyltransferase, found in Arabidopsis thaliana (Mouse-ear cress).